The sequence spans 270 residues: tRNA (guanine-N(1)-)-methyltransferase (270 aa).

S-adenosyl-L-methionine contacts are provided by residues G117 and 137–142; that span reads IGDYVL.

It belongs to the RNA methyltransferase TrmD family. Homodimer.

It is found in the cytoplasm. It catalyses the reaction guanosine(37) in tRNA + S-adenosyl-L-methionine = N(1)-methylguanosine(37) in tRNA + S-adenosyl-L-homocysteine + H(+). In terms of biological role, specifically methylates guanosine-37 in various tRNAs. This Heliobacterium modesticaldum (strain ATCC 51547 / Ice1) protein is tRNA (guanine-N(1)-)-methyltransferase.